The following is a 404-amino-acid chain: Probable tRNA sulfurtransferase (404 aa).

Residues 60–165 (QPVVEALKLV…DEAAYISYEE (106 aa)) form the THUMP domain. ATP contacts are provided by residues 183–184 (ML), 208–209 (HF), R265, G287, and Q296.

It belongs to the ThiI family.

It localises to the cytoplasm. The enzyme catalyses [ThiI sulfur-carrier protein]-S-sulfanyl-L-cysteine + a uridine in tRNA + 2 reduced [2Fe-2S]-[ferredoxin] + ATP + H(+) = [ThiI sulfur-carrier protein]-L-cysteine + a 4-thiouridine in tRNA + 2 oxidized [2Fe-2S]-[ferredoxin] + AMP + diphosphate. It catalyses the reaction [ThiS sulfur-carrier protein]-C-terminal Gly-Gly-AMP + S-sulfanyl-L-cysteinyl-[cysteine desulfurase] + AH2 = [ThiS sulfur-carrier protein]-C-terminal-Gly-aminoethanethioate + L-cysteinyl-[cysteine desulfurase] + A + AMP + 2 H(+). The protein operates within cofactor biosynthesis; thiamine diphosphate biosynthesis. Its function is as follows. Catalyzes the ATP-dependent transfer of a sulfur to tRNA to produce 4-thiouridine in position 8 of tRNAs, which functions as a near-UV photosensor. Also catalyzes the transfer of sulfur to the sulfur carrier protein ThiS, forming ThiS-thiocarboxylate. This is a step in the synthesis of thiazole, in the thiamine biosynthesis pathway. The sulfur is donated as persulfide by IscS. In Streptococcus pyogenes serotype M5 (strain Manfredo), this protein is Probable tRNA sulfurtransferase.